Here is a 106-residue protein sequence, read N- to C-terminus: ATP-dependent Clp protease adapter protein ClpS (106 aa).

Positions 1–10 are enriched in basic and acidic residues; the sequence is MSQKTVHDQD. The tract at residues 1-22 is disordered; it reads MSQKTVHDQDNALLLETGNTKV.

This sequence belongs to the ClpS family. As to quaternary structure, binds to the N-terminal domain of the chaperone ClpA.

Involved in the modulation of the specificity of the ClpAP-mediated ATP-dependent protein degradation. The chain is ATP-dependent Clp protease adapter protein ClpS from Xylella fastidiosa (strain 9a5c).